A 313-amino-acid chain; its full sequence is Protein FixB (313 aa).

255 to 283 is an FAD binding site; the sequence is LYLAVGISGQIQHMVGANASQTIFAINKD.

It belongs to the ETF alpha-subunit/FixB family. As to quaternary structure, heterodimer of FixA and FixB.

The protein operates within amine and polyamine metabolism; carnitine metabolism. Its function is as follows. Required for anaerobic carnitine reduction. May bring reductant to CaiA. In Escherichia coli O81 (strain ED1a), this protein is Protein FixB.